The following is a 344-amino-acid chain: L-sulfolactate dehydrogenase (344 aa).

The protein belongs to the LDH2/MDH2 oxidoreductase family.

Its subcellular location is the cytoplasm. The catalysed reaction is a (2S)-2-hydroxycarboxylate + NAD(+) = a 2-oxocarboxylate + NADH + H(+). It participates in cofactor biosynthesis; coenzyme M biosynthesis; sulfoacetaldehyde from phosphoenolpyruvate and sulfite: step 3/4. Its pathway is cofactor biosynthesis; 5,6,7,8-tetrahydromethanopterin biosynthesis. Catalyzes the reduction of sulfopyruvate to (R)-sulfolactate much more efficiently than the reverse reaction. Also catalyzes the reduction of oxaloacetate, alpha-ketoglutarate, and to a much lower extent, KHTCA, but not pyruvate. Involved in the biosynthesis of both coenzyme M (with (R)-sulfolactate) and methanopterin (with alpha-ketoglutarate). The polypeptide is L-sulfolactate dehydrogenase (comC) (Methanocaldococcus jannaschii (strain ATCC 43067 / DSM 2661 / JAL-1 / JCM 10045 / NBRC 100440) (Methanococcus jannaschii)).